Here is a 226-residue protein sequence, read N- to C-terminus: Protein DEHYDRATION-INDUCED 19 (226 aa).

The disordered stretch occupies residues 158–208; the sequence is FPTSDTEETSKPPISIPDDASVIKETPAQPWDSSIDSSLTREEREQKRKQA. Over residues 196–205 the composition is skewed to basic and acidic residues; that stretch reads LTREEREQKR.

Belongs to the Di19 family.

This Oryza sativa subsp. japonica (Rice) protein is Protein DEHYDRATION-INDUCED 19 (DI19-1).